Reading from the N-terminus, the 584-residue chain is uncharacterized protein (584 aa).

Residues 1-27 (MGLSRKKIFTWPLLLTGMAVVSTTFSS) form the signal peptide. Residue C28 is the site of N-palmitoyl cysteine attachment. C28 carries S-diacylglycerol cysteine lipidation. The interval 530–570 (NLPKKEGSTNQANQQTNQTNRSTDATKKDSSSDETNKNPLA) is disordered. Positions 538–552 (TNQANQQTNQTNRST) are enriched in low complexity. Residues 553 to 565 (DATKKDSSSDETN) are compositionally biased toward basic and acidic residues.

It belongs to the MG067/MG068/MG395 family.

The protein resides in the cell membrane. This is an uncharacterized protein from Mycoplasmoides gallisepticum (strain R(low / passage 15 / clone 2)) (Mycoplasma gallisepticum).